Reading from the N-terminus, the 310-residue chain is 300 kDa antigen AG231 (310 aa).

Residues 1–23 (VTGSCVVTGSCVVTDSCVVTGSC) are 4 X 6 AA tandem repeats of V-V-T-G-S-C. The interval 29 to 106 (VTTQESVTTQ…TQEPVTVEEH (78 aa)) is 13 X 6 AA tandem repeats of V-V-[TI]-[QE]-E-[PH]. Over residues 53–101 (VTIEEPVTTQEPVTIEEPVTTQEPVTTQEPVTTQEPVTTQEPVTTQEPV) the composition is skewed to low complexity. The segment at 53–310 (VTIEEPVTTQ…FGRGNKNDKK (258 aa)) is disordered. Composition is skewed to basic and acidic residues over residues 103–114 (VEEHIDEKKGSE) and 147–160 (NKND…KKPS). A 45 AA repeat 1 repeat occupies 107–152 (IDEKKGSEGDNISLSSLSEETEEKSHTKKKKSSWLKFGRGNKNDKK). Residues 176-190 (TDSQISVNAQDSVTI) are compositionally biased toward polar residues. The 13 X 6 AA approximate tandem repeats stretch occupies residues 188-265 (VTIQEPTATQ…TQEPSTTQEH (78 aa)). A compositionally biased stretch (low complexity) spans 191–235 (QEPTATQEPPTTQELTATQEPTTTQETVTEQEPTTTQETVTAQEP). The span at 236–263 (ITTQEPVTAQEPVTTQELIATQEPSTTQ) shows a compositional bias: polar residues. Residues 264 to 273 (EHADEKKASE) show a composition bias toward basic and acidic residues. A 45 AA repeat 2 repeat occupies 266–310 (ADEKKASEGDNISLSRLSEETEEKSHTKKKSSWLKFGRGNKNDKK).

The polypeptide is 300 kDa antigen AG231 (FIRA) (Plasmodium falciparum (isolate FC27 / Papua New Guinea)).